A 428-amino-acid chain; its full sequence is Histidine--tRNA ligase (428 aa).

It belongs to the class-II aminoacyl-tRNA synthetase family. In terms of assembly, homodimer.

Its subcellular location is the cytoplasm. The catalysed reaction is tRNA(His) + L-histidine + ATP = L-histidyl-tRNA(His) + AMP + diphosphate + H(+). In Lactobacillus delbrueckii subsp. bulgaricus (strain ATCC 11842 / DSM 20081 / BCRC 10696 / JCM 1002 / NBRC 13953 / NCIMB 11778 / NCTC 12712 / WDCM 00102 / Lb 14), this protein is Histidine--tRNA ligase.